The following is a 201-amino-acid chain: Membrane protein UL120 (201 aa).

Residues 1 to 25 (MYRAGVTLLVVAVVSFGRWDSVTVA) form the signal peptide. Residues 26 to 170 (TTIRVGWWYE…AYFRRSDHRA (145 aa)) lie on the Extracellular side of the membrane. Residues N47, N50, N56, N85, N96, N114, N123, and N138 are each glycosylated (N-linked (GlcNAc...) asparagine; by host). A helical transmembrane segment spans residues 171-191 (FMIVILTQVVFVVFIINASFI). The Cytoplasmic segment spans residues 192–201 (WSWTFRRHKR).

The protein belongs to the HHV-5 UL120 protein family.

Its subcellular location is the host membrane. In Human cytomegalovirus (strain Merlin) (HHV-5), this protein is Membrane protein UL120 (UL120).